A 287-amino-acid polypeptide reads, in one-letter code: Ribosomal RNA small subunit methyltransferase A (287 aa).

Residues N28, L30, G55, E77, D103, and N123 each coordinate S-adenosyl-L-methionine.

The protein belongs to the class I-like SAM-binding methyltransferase superfamily. rRNA adenine N(6)-methyltransferase family. RsmA subfamily.

The protein resides in the cytoplasm. The enzyme catalyses adenosine(1518)/adenosine(1519) in 16S rRNA + 4 S-adenosyl-L-methionine = N(6)-dimethyladenosine(1518)/N(6)-dimethyladenosine(1519) in 16S rRNA + 4 S-adenosyl-L-homocysteine + 4 H(+). Functionally, specifically dimethylates two adjacent adenosines (A1518 and A1519) in the loop of a conserved hairpin near the 3'-end of 16S rRNA in the 30S particle. May play a critical role in biogenesis of 30S subunits. The chain is Ribosomal RNA small subunit methyltransferase A from Rhodopseudomonas palustris (strain TIE-1).